A 426-amino-acid polypeptide reads, in one-letter code: 5-methylthioadenosine/S-adenosylhomocysteine deaminase (426 aa).

Histidine 60 and histidine 62 together coordinate Zn(2+). The substrate site is built by glutamate 89 and histidine 179. Histidine 206 is a Zn(2+) binding site. The substrate site is built by glutamate 209 and aspartate 294. Aspartate 294 is a Zn(2+) binding site.

This sequence belongs to the metallo-dependent hydrolases superfamily. MTA/SAH deaminase family. Zn(2+) is required as a cofactor.

The catalysed reaction is S-adenosyl-L-homocysteine + H2O + H(+) = S-inosyl-L-homocysteine + NH4(+). It catalyses the reaction S-methyl-5'-thioadenosine + H2O + H(+) = S-methyl-5'-thioinosine + NH4(+). Catalyzes the deamination of 5-methylthioadenosine and S-adenosyl-L-homocysteine into 5-methylthioinosine and S-inosyl-L-homocysteine, respectively. Is also able to deaminate adenosine. This is 5-methylthioadenosine/S-adenosylhomocysteine deaminase from Dictyoglomus turgidum (strain DSM 6724 / Z-1310).